The chain runs to 161 residues: Glutaredoxin-2, mitochondrial (161 aa).

The transit peptide at 1–19 (MLWRRAALAGTRLVWSRSG) directs the protein to the mitochondrion. Ser20 is subject to Phosphoserine. One can recognise a Glutaredoxin domain in the interval 54–154 (VNQIQETISD…PLVHQCYLKK (101 aa)). Residue Cys65 coordinates [2Fe-2S] cluster. Lys71 contributes to the glutathione binding site. Residue Cys74 is modified to S-glutathionyl cysteine; alternate. Cys74 and Cys77 form a disulfide bridge. Residues Gln106 and Val118 each contribute to the glutathione site. Cys150 provides a ligand contact to [2Fe-2S] cluster.

It belongs to the glutaredoxin family. As to quaternary structure, monomer; active form. Homodimer; inactive form. The homodimer is probably linked by 1 2Fe-2S cluster.

Its subcellular location is the mitochondrion. Its activity is regulated as follows. The 2Fe-2S present in the homodimer leads to inactivation of the enzyme. The 2Fe-2S may serve as a redox sensor: the presence of one-electron oxidants or reductants leading to the loss of the 2Fe-2S cluster, subsequent monomerization and activation of the enzyme. Functionally, glutathione-dependent oxidoreductase that facilitates the maintenance of mitochondrial redox homeostasis upon induction of apoptosis by oxidative stress. Involved in response to hydrogen peroxide and regulation of apoptosis caused by oxidative stress. Acts as a very efficient catalyst of monothiol reactions because of its high affinity for protein glutathione-mixed disulfides. Can receive electrons not only from glutathione (GSH), but also from thioredoxin reductase supporting both monothiol and dithiol reactions. Efficiently catalyzes both glutathionylation and deglutathionylation of mitochondrial complex I, which in turn regulates the superoxide production by the complex. Overexpression decreases the susceptibility to apoptosis and prevents loss of cardiolipin and cytochrome c release. This Pongo abelii (Sumatran orangutan) protein is Glutaredoxin-2, mitochondrial (GLRX2).